A 375-amino-acid chain; its full sequence is uncharacterized protein (375 aa).

Residues 52–301 (VLLSAHRGSW…KQGFATYHES (250 aa)) enclose the GP-PDE domain.

This is an uncharacterized protein from Sinorhizobium fredii (strain NBRC 101917 / NGR234).